The chain runs to 109 residues: UPF0060 membrane protein RHA1_ro06609 (109 aa).

4 helical membrane passes run 7 to 27, 33 to 53, 62 to 82, and 88 to 108; these read VALF…VWQG, GWIW…VATL, ILAA…MVAD, and RWDV…MYAP.

It belongs to the UPF0060 family.

Its subcellular location is the cell membrane. The polypeptide is UPF0060 membrane protein RHA1_ro06609 (Rhodococcus jostii (strain RHA1)).